We begin with the raw amino-acid sequence, 198 residues long: MTLVPMVVEQTSRGERAYDIYSRLLKERIIFITGPIEDQMASLVVAQLIFLEAENPEKDISMYINSPGGVVTAGLSIYDTMQYVKPRIATLCLGQAASMGSLLLAAGEKGMRCALPNSRIMIHQPSGGFQGQATDIEIHAKEILNIKSRLNYIYVKHTGRELSEVVASMERDNFMSADSAQDFGIIDKVIEKRLDIDV.

Serine 98 (nucleophile) is an active-site residue. Residue histidine 123 is part of the active site.

Belongs to the peptidase S14 family. As to quaternary structure, fourteen ClpP subunits assemble into 2 heptameric rings which stack back to back to give a disk-like structure with a central cavity, resembling the structure of eukaryotic proteasomes.

It localises to the cytoplasm. The catalysed reaction is Hydrolysis of proteins to small peptides in the presence of ATP and magnesium. alpha-casein is the usual test substrate. In the absence of ATP, only oligopeptides shorter than five residues are hydrolyzed (such as succinyl-Leu-Tyr-|-NHMec, and Leu-Tyr-Leu-|-Tyr-Trp, in which cleavage of the -Tyr-|-Leu- and -Tyr-|-Trp bonds also occurs).. In terms of biological role, cleaves peptides in various proteins in a process that requires ATP hydrolysis. Has a chymotrypsin-like activity. Plays a major role in the degradation of misfolded proteins. This Ehrlichia ruminantium (strain Welgevonden) protein is ATP-dependent Clp protease proteolytic subunit.